A 279-amino-acid chain; its full sequence is Acyl-[acyl-carrier-protein]--UDP-N-acetylglucosamine O-acyltransferase (279 aa).

This sequence belongs to the transferase hexapeptide repeat family. LpxA subfamily. In terms of assembly, homotrimer.

It is found in the cytoplasm. The enzyme catalyses a (3R)-hydroxyacyl-[ACP] + UDP-N-acetyl-alpha-D-glucosamine = a UDP-3-O-[(3R)-3-hydroxyacyl]-N-acetyl-alpha-D-glucosamine + holo-[ACP]. It functions in the pathway glycolipid biosynthesis; lipid IV(A) biosynthesis; lipid IV(A) from (3R)-3-hydroxytetradecanoyl-[acyl-carrier-protein] and UDP-N-acetyl-alpha-D-glucosamine: step 1/6. Involved in the biosynthesis of lipid A, a phosphorylated glycolipid that anchors the lipopolysaccharide to the outer membrane of the cell. This is Acyl-[acyl-carrier-protein]--UDP-N-acetylglucosamine O-acyltransferase from Mesorhizobium japonicum (strain LMG 29417 / CECT 9101 / MAFF 303099) (Mesorhizobium loti (strain MAFF 303099)).